A 663-amino-acid polypeptide reads, in one-letter code: Zyxin (663 aa).

The disordered stretch occupies residues 35-438 (PPKPKINPFK…QQDQTLGSQG (404 aa)). Pro residues-rich tracts occupy residues 122 to 148 (FPPP…PPPL) and 160 to 211 (VPVP…PPSV). Residues 298–314 (PQKTTEPPAEASQSSPK) are compositionally biased toward polar residues. 2 stretches are compositionally biased toward basic and acidic residues: residues 342–353 (QRERPRVLEKPR) and 360–375 (EPEH…ERTR). 2 stretches are compositionally biased toward polar residues: residues 377-393 (LGPQ…QSTG) and 427-438 (TGQQDQTLGSQG). 3 LIM zinc-binding domains span residues 470 to 531 (ELCG…TLEC), 532 to 589 (CAVC…RRYA), and 590 to 660 (PRCC…RARA).

It belongs to the zyxin/ajuba family. As to quaternary structure, interacts (via LIM2 domain) with hesx1/anf1. In terms of tissue distribution, at the early gastrula stage, expressed at a low level in the animal hemisphere. Expression rises by the end of gastrulation in the anterior part of the embryo, where it gradually increases by the midneurula stage. During neurulation, expression continues most intensively in the anterior part of the neural plate and around it. At later stages, intensely expressed in the brain and at lower levels in the spinal cord, eyes, nasal placodes, within somites, and around the cement gland.

The protein resides in the cytoplasm. Its subcellular location is the cytoskeleton. The protein localises to the cell junction. It is found in the focal adhesion. Adhesion plaque protein. May be a component of a signal transduction pathway that mediates adhesion-stimulated changes in gene expression. Suppresses the transcription-repressing activity of hesx1/anf1. The polypeptide is Zyxin (Xenopus laevis (African clawed frog)).